We begin with the raw amino-acid sequence, 102 residues long: Large ribosomal subunit protein mL63 (102 aa).

This sequence belongs to the mitochondrion-specific ribosomal protein mL63 family.

It localises to the mitochondrion. The chain is Large ribosomal subunit protein mL63 (MRPL57) from Bos taurus (Bovine).